The following is a 415-amino-acid chain: BTB/POZ and MATH domain-containing protein 6 (415 aa).

The segment at 1-33 is disordered; sequence MSKLMTRTSGSSSPNTIPDQIESPTSSRSVTQT. In terms of domain architecture, MATH spans 35-169; sequence NGSHQFVIQG…DDCLKINCTV (135 aa). The 67-residue stretch at 205–271 folds into the BTB domain; it reads SDVTFDVAGE…MYKDSLPGDV (67 aa). Residues 385–415 are disordered; the sequence is SSSGGGKSQSVWAQLSNGGETSSRRVRQRTT. Residues 392 to 405 show a composition bias toward polar residues; sequence SQSVWAQLSNGGET.

Belongs to the Tdpoz family. Heterodimer with BPM1. Interacts with RAP2-4. Interacts with CUL3A. Binds to MYB56 at the promoter of FLOWERING LOCUS T (FT). Ubiquitous.

The protein resides in the nucleus. It is found in the cytoplasm. It participates in protein modification; protein ubiquitination. Its function is as follows. May act as a substrate-specific adapter of an E3 ubiquitin-protein ligase complex (CUL3-RBX1-BTB) which mediates the ubiquitination and subsequent proteasomal degradation of target proteins. In Arabidopsis thaliana (Mouse-ear cress), this protein is BTB/POZ and MATH domain-containing protein 6 (BPM6).